The primary structure comprises 317 residues: Hairy/enhancer-of-split related with YRPW motif protein 1 (317 aa).

The disordered stretch occupies residues 1–59 (MKRNHDFSSSDSELDENIEVEKESADENAGANSPLGSMSPSTTSQVQARKRRRGIIEKR). The segment covering 30 to 47 (GANSPLGSMSPSTTSQVQ) has biased composition (polar residues). The bHLH domain maps to 48–103 (ARKRRRGIIEKRRRDRINNSLSELRRLVPSAFEKQGSAKLEKAEILQMTVDHLKML). In terms of domain architecture, Orange spans 121 to 157 (YRGLGFRECLAETARYLSIIEGLDNTDPLRIRLVSHL). Composition is skewed to low complexity over residues 193–226 (QQQQQQGAPLARSTSSPPSSNSSSPSSSSPSAPS) and 248–264 (PPSTSLPPGLTPPTASK). Residues 193–264 (QQQQQQGAPL…PGLTPPTASK (72 aa)) form a disordered region. A YRPW motif motif is present at residues 307-310 (YRPW).

It belongs to the HEY family.

The protein localises to the nucleus. Its function is as follows. Transcriptional repressor which functions as a downstream effector of Notch signaling. This chain is Hairy/enhancer-of-split related with YRPW motif protein 1 (hey1), found in Danio rerio (Zebrafish).